Here is a 248-residue protein sequence, read N- to C-terminus: Type III pantothenate kinase (248 aa).

An ATP-binding site is contributed by 6 to 13 (DIGNTETK). A substrate-binding site is contributed by 103–106 (GSDR). The Proton acceptor role is filled by Asp105. Asp124 contributes to the K(+) binding site. Thr127 contacts ATP. Residue Thr178 participates in substrate binding.

This sequence belongs to the type III pantothenate kinase family. As to quaternary structure, homodimer. Requires NH4(+) as cofactor. It depends on K(+) as a cofactor.

Its subcellular location is the cytoplasm. It catalyses the reaction (R)-pantothenate + ATP = (R)-4'-phosphopantothenate + ADP + H(+). Its pathway is cofactor biosynthesis; coenzyme A biosynthesis; CoA from (R)-pantothenate: step 1/5. Its function is as follows. Catalyzes the phosphorylation of pantothenate (Pan), the first step in CoA biosynthesis. The sequence is that of Type III pantothenate kinase from Pelagibacter ubique (strain HTCC1062).